Consider the following 327-residue polypeptide: Melanoma-associated antigen B18 (327 aa).

A compositionally biased stretch (basic residues) spans 1–19; it reads MPRGQKSKLRAREKRRQAR. Residues 1–85 form a disordered region; it reads MPRGQKSKLR…SSDDSEDTED (85 aa). Polar residues predominate over residues 46–70; sequence MPTSPNMPMGEQSTFSHSYTSTSDQ. Residues 91 to 289 form the MAGE domain; the sequence is INHKVVLLVQ…DSFPTLYEAA (199 aa).

As to quaternary structure, interacts with LNX1. In terms of tissue distribution, expressed in testis, stomach, large intestine, small intestine, spleen, lymph node, bone marrow lymphocytes and blood T-lymphocytes. Not detected in brain, heart, lung, liver or kidney (at protein level).

The protein resides in the cytoplasm. In terms of biological role, may enhance ubiquitin ligase activity of RING-type zinc finger-containing E3 ubiquitin-protein ligases. Proposed to act through recruitment and/or stabilization of the Ubl-conjugating enzyme (E2) at the E3:substrate complex. The sequence is that of Melanoma-associated antigen B18 from Mus musculus (Mouse).